The primary structure comprises 622 residues: Chaperone protein HscA homolog (622 aa).

Belongs to the heat shock protein 70 family.

Chaperone involved in the maturation of iron-sulfur cluster-containing proteins. Has a low intrinsic ATPase activity which is markedly stimulated by HscB. In Burkholderia mallei (strain NCTC 10247), this protein is Chaperone protein HscA homolog.